The sequence spans 97 residues: Protein GLUTAMINE DUMPER 7 (97 aa).

The Extracellular portion of the chain corresponds to 1-25; it reads MSLHRDSMVPVNSRLENMDSPILSK. The chain crosses the membrane as a helical span at residues 26–46; it reads ICAWGVMLGLFALSLFAMAYA. The Cytoplasmic segment spans residues 47-97; that stretch reads CYHKQTSNSCIEEKQGKKQVLKPLDMEPKIVVIMAGNENPTFFAKPTQINA. The VIMAG motif lies at 78–82; that stretch reads VIMAG.

The protein belongs to the GLUTAMINE DUMPER 1 (TC 9.B.60) family. As to expression, expressed in the vascular tissues, even in the minor veins of the leaves.

The protein resides in the membrane. In terms of biological role, probable subunit of an amino acid transporter involved in the regulation of the amino acid metabolism. Stimulates amino acid export by activating nonselective amino acid facilitators. The sequence is that of Protein GLUTAMINE DUMPER 7 (GDU7) from Arabidopsis thaliana (Mouse-ear cress).